The primary structure comprises 438 residues: tRNA(Ile)-lysidine synthase (438 aa).

An ATP-binding site is contributed by Ser19 to Ser24.

The protein belongs to the tRNA(Ile)-lysidine synthase family.

It is found in the cytoplasm. It catalyses the reaction cytidine(34) in tRNA(Ile2) + L-lysine + ATP = lysidine(34) in tRNA(Ile2) + AMP + diphosphate + H(+). Ligates lysine onto the cytidine present at position 34 of the AUA codon-specific tRNA(Ile) that contains the anticodon CAU, in an ATP-dependent manner. Cytidine is converted to lysidine, thus changing the amino acid specificity of the tRNA from methionine to isoleucine. The chain is tRNA(Ile)-lysidine synthase from Buchnera aphidicola subsp. Baizongia pistaciae (strain Bp).